Consider the following 775-residue polypeptide: Semaphorin-3E (775 aa).

Positions Met-1–Thr-25 are cleaved as a signal peptide. A Sema domain is found at Arg-32–Phe-516. Asn-44 is a glycosylation site (N-linked (GlcNAc...) asparagine). Residues Cys-105 and Cys-115 are joined by a disulfide bond. Asn-126 carries an N-linked (GlcNAc...) asparagine glycan. 4 disulfide bridges follow: Cys-133/Cys-142, Cys-270/Cys-382, Cys-294/Cys-342, and Cys-519/Cys-537. An N-linked (GlcNAc...) asparagine glycan is attached at Asn-330. Residues Ala-581 to Thr-669 form the Ig-like C2-type domain. Asn-595 and Asn-596 each carry an N-linked (GlcNAc...) asparagine glycan. The cysteines at positions 654 and 729 are disulfide-linked. The segment at Leu-742–Ser-775 is disordered. A compositionally biased stretch (basic and acidic residues) spans Gln-755–Ser-775.

The protein belongs to the semaphorin family. In terms of assembly, interacts with PLXND1.

It localises to the secreted. Functionally, plays an important role in signaling via the cell surface receptor PLXND1. Mediates reorganization of the actin cytoskeleton, leading to the retraction of cell projections. Promotes focal adhesion disassembly and inhibits adhesion of endothelial cells to the extracellular matrix. Regulates angiogenesis, both during embryogenesis and after birth. Can down-regulate sprouting angiogenesis. Required for normal vascular patterning during embryogenesis. Plays an important role in ensuring the specificity of synapse formation. The chain is Semaphorin-3E (SEMA3E) from Homo sapiens (Human).